The primary structure comprises 293 residues: 4-hydroxy-tetrahydrodipicolinate synthase (293 aa).

Thr46 is a pyruvate binding site. Tyr134 serves as the catalytic Proton donor/acceptor. Residue Lys162 is the Schiff-base intermediate with substrate of the active site. A pyruvate-binding site is contributed by Ile204.

It belongs to the DapA family. As to quaternary structure, homotetramer; dimer of dimers.

It is found in the cytoplasm. The catalysed reaction is L-aspartate 4-semialdehyde + pyruvate = (2S,4S)-4-hydroxy-2,3,4,5-tetrahydrodipicolinate + H2O + H(+). It participates in amino-acid biosynthesis; L-lysine biosynthesis via DAP pathway; (S)-tetrahydrodipicolinate from L-aspartate: step 3/4. Functionally, catalyzes the condensation of (S)-aspartate-beta-semialdehyde [(S)-ASA] and pyruvate to 4-hydroxy-tetrahydrodipicolinate (HTPA). The protein is 4-hydroxy-tetrahydrodipicolinate synthase of Bdellovibrio bacteriovorus (strain ATCC 15356 / DSM 50701 / NCIMB 9529 / HD100).